The chain runs to 283 residues: 4-diphosphocytidyl-2-C-methyl-D-erythritol kinase (283 aa).

Residue lysine 10 is part of the active site. Residue 99–109 (PMGGGLGGGSS) coordinates ATP. The active site involves aspartate 141.

It belongs to the GHMP kinase family. IspE subfamily. Homodimer.

The catalysed reaction is 4-CDP-2-C-methyl-D-erythritol + ATP = 4-CDP-2-C-methyl-D-erythritol 2-phosphate + ADP + H(+). The protein operates within isoprenoid biosynthesis; isopentenyl diphosphate biosynthesis via DXP pathway; isopentenyl diphosphate from 1-deoxy-D-xylulose 5-phosphate: step 3/6. Functionally, catalyzes the phosphorylation of the position 2 hydroxy group of 4-diphosphocytidyl-2C-methyl-D-erythritol. This chain is 4-diphosphocytidyl-2-C-methyl-D-erythritol kinase, found in Salmonella choleraesuis (strain SC-B67).